The sequence spans 382 residues: MSLKEKTQSLFANAFGYPATHTIQAPGRVNLIGEHTDYNDGFVLPCAIDYQTVISCAPRDDRKVRVMAADYENQLDEFSLNAPIVAHENYQWANYVRGVVKHLQLRNNSFGGVDMVISGNVPQGAGLSSSASLEVAVGTVLQQLYHLPLDGAQIALNGQEAENQFVGCNCGIMDQLISALGKKDHSLLIDCRSLGTKAVSMPKGVAVVIINSNFKRTLVGSEYNTRREQCETGARFFQQPALRDVTIEEFNAVAHELDPIVAKRVRHILTENARTVEAASALEQGDLKRMGELMAESHASMRDDFEITVPQIDTLVEIVKAVIGDKGGVRMTGGGFGGCIVALIPEELVPAVQQAVAEQYEAKIGIKETFYVCKPSQGAGQC.

34-37 (EHTD) contacts substrate. 124–130 (GAGLSSS) contacts ATP. Mg(2+)-binding residues include Ser130 and Glu162. Asp174 functions as the Proton acceptor in the catalytic mechanism. Tyr223 contacts substrate.

It belongs to the GHMP kinase family. GalK subfamily.

The protein localises to the cytoplasm. It catalyses the reaction alpha-D-galactose + ATP = alpha-D-galactose 1-phosphate + ADP + H(+). It functions in the pathway carbohydrate metabolism; galactose metabolism. In terms of biological role, catalyzes the transfer of the gamma-phosphate of ATP to D-galactose to form alpha-D-galactose-1-phosphate (Gal-1-P). The sequence is that of Galactokinase from Shigella boydii serotype 18 (strain CDC 3083-94 / BS512).